Here is a 284-residue protein sequence, read N- to C-terminus: Protein pxr1 (284 aa).

Positions 25–71 constitute a G-patch domain; it reads TNRLGFKLLSSYGWVNGNGLGEKQHGRIHNIKVSLKDDTLGIGAKAT. The disordered stretch occupies residues 149-253; sequence DEDRVCEDAS…KVKEGNRPAS (105 aa). Serine 159 and serine 160 each carry phosphoserine. Composition is skewed to basic residues over residues 166–181 and 196–206; these read EKRKKHSSKKKSKKKT and TKKKKKEHKKK. Basic and acidic residues-rich tracts occupy residues 207–224 and 233–249; these read DKESSSKKRKSGSSDKEE and KDKPESTSSVEKVKEGN.

It belongs to the PINX1 family.

It is found in the nucleus. Its subcellular location is the nucleolus. Involved in rRNA-processing at A0, A1 and A2 sites and negatively regulates telomerase. The chain is Protein pxr1 (pxr1) from Schizosaccharomyces pombe (strain 972 / ATCC 24843) (Fission yeast).